Reading from the N-terminus, the 290-residue chain is uncharacterized protein (290 aa).

This is an uncharacterized protein from Escherichia coli (strain K12).